The primary structure comprises 129 residues: Large ribosomal subunit protein uL22 (129 aa).

Belongs to the universal ribosomal protein uL22 family. In terms of assembly, part of the 50S ribosomal subunit.

Functionally, this protein binds specifically to 23S rRNA; its binding is stimulated by other ribosomal proteins, e.g. L4, L17, and L20. It is important during the early stages of 50S assembly. It makes multiple contacts with different domains of the 23S rRNA in the assembled 50S subunit and ribosome. The globular domain of the protein is located near the polypeptide exit tunnel on the outside of the subunit, while an extended beta-hairpin is found that lines the wall of the exit tunnel in the center of the 70S ribosome. This Brucella suis biovar 1 (strain 1330) protein is Large ribosomal subunit protein uL22.